We begin with the raw amino-acid sequence, 89 residues long: Large ribosomal subunit protein eL34 (89 aa).

The tract at residues M1–K29 is disordered. Over residues R13–K29 the composition is skewed to basic residues.

It belongs to the eukaryotic ribosomal protein eL34 family.

The chain is Large ribosomal subunit protein eL34 from Methanosphaera stadtmanae (strain ATCC 43021 / DSM 3091 / JCM 11832 / MCB-3).